The sequence spans 351 residues: S-adenosylmethionine:tRNA ribosyltransferase-isomerase (351 aa).

Belongs to the QueA family. Monomer.

It localises to the cytoplasm. The enzyme catalyses 7-aminomethyl-7-carbaguanosine(34) in tRNA + S-adenosyl-L-methionine = epoxyqueuosine(34) in tRNA + adenine + L-methionine + 2 H(+). It participates in tRNA modification; tRNA-queuosine biosynthesis. Transfers and isomerizes the ribose moiety from AdoMet to the 7-aminomethyl group of 7-deazaguanine (preQ1-tRNA) to give epoxyqueuosine (oQ-tRNA). The protein is S-adenosylmethionine:tRNA ribosyltransferase-isomerase of Hahella chejuensis (strain KCTC 2396).